Consider the following 115-residue polypeptide: Non-specific lipid-transfer protein 4.1 (115 aa).

An N-terminal signal peptide occupies residues 1–25 (MARAAASQLVLVALVAAMLLVAADA). 4 cysteine pairs are disulfide-bonded: Cys29/Cys77, Cys39/Cys54, Cys55/Cys97, and Cys75/Cys111.

The protein belongs to the plant LTP family.

Its function is as follows. Plant non-specific lipid-transfer proteins transfer phospholipids as well as galactolipids across membranes. May play a role in wax or cutin deposition in the cell walls of expanding epidermal cells and certain secretory tissues. The polypeptide is Non-specific lipid-transfer protein 4.1 (LTP4.1) (Hordeum vulgare (Barley)).